The sequence spans 260 residues: Thrombin-like enzyme 2 (260 aa).

An N-terminal signal peptide occupies residues 1 to 18; the sequence is MMLIRVLANLLILQLSYA. A propeptide spanning residues 19–24 is cleaved from the precursor; that stretch reads QKSSEL. The region spanning 25 to 251 is the Peptidase S1 domain; sequence VIGGDECNIN…HLDWIQSIIA (227 aa). Cystine bridges form between C31–C165, C52–C68, C102–C258, C144–C212, C176–C191, and C202–C227. H67 serves as the catalytic Charge relay system. N105 is a glycosylation site (N-linked (GlcNAc...) asparagine). Residue D112 is the Charge relay system of the active site. N-linked (GlcNAc...) asparagine glycans are attached at residues N156 and N172. S206 serves as the catalytic Charge relay system. N-linked (GlcNAc...) asparagine glycosylation occurs at N253.

It belongs to the peptidase S1 family. Snake venom subfamily. Monomer. Expressed by the venom gland.

It is found in the secreted. Functionally, thrombin-like snake venom serine protease. In Trimeresurus albolabris (White-lipped pit viper), this protein is Thrombin-like enzyme 2.